Here is a 406-residue protein sequence, read N- to C-terminus: LIM/homeobox protein Lhx2 (406 aa).

LIM zinc-binding domains follow at residues Cys-53–Asp-105 and Cys-115–His-168. A disordered region spans residues Asp-250 to Arg-270. Residues Thr-266 to Leu-325 constitute a DNA-binding region (homeobox). Positions Lys-307–Arg-323 match the Nuclear localization signal motif. Positions Gln-328–Ala-356 are enriched in polar residues. Disordered stretches follow at residues Gln-328–Thr-374 and Gly-387–Phe-406. Low complexity predominate over residues Ser-357–Thr-374. Residues Ser-396–Phe-406 are compositionally biased toward polar residues.

Interacts (via LIM domains) with CITED2. Interacts with POU4F2.

It is found in the nucleus. Acts as a transcriptional activator. Stimulates the promoter of the alpha-glycoprotein gene. Transcriptional regulatory protein involved in the control of cell differentiation in developing lymphoid and neural cell types. The sequence is that of LIM/homeobox protein Lhx2 (LHX2) from Homo sapiens (Human).